A 376-amino-acid polypeptide reads, in one-letter code: Alanine racemase (376 aa).

Lys-36 serves as the catalytic Proton acceptor; specific for D-alanine. Lys-36 carries the post-translational modification N6-(pyridoxal phosphate)lysine. Substrate is bound at residue Arg-134. The active-site Proton acceptor; specific for L-alanine is the Tyr-266. Position 314 (Met-314) interacts with substrate.

It belongs to the alanine racemase family. Requires pyridoxal 5'-phosphate as cofactor.

The catalysed reaction is L-alanine = D-alanine. It functions in the pathway amino-acid biosynthesis; D-alanine biosynthesis; D-alanine from L-alanine: step 1/1. In terms of biological role, catalyzes the interconversion of L-alanine and D-alanine. May also act on other amino acids. This Nitratidesulfovibrio vulgaris (strain DP4) (Desulfovibrio vulgaris) protein is Alanine racemase (alr).